Consider the following 285-residue polypeptide: Phosphatidylglycerol--prolipoprotein diacylglyceryl transferase (285 aa).

5 helical membrane-spanning segments follow: residues alanine 17–leucine 37, tryptophan 43–leucine 63, leucine 78–tyrosine 98, tryptophan 113–valine 133, and leucine 139–glycine 159. Residue arginine 160 coordinates a 1,2-diacyl-sn-glycero-3-phospho-(1'-sn-glycerol). Transmembrane regions (helical) follow at residues leucine 195 to alanine 215, glycine 223 to phenylalanine 243, and glycine 256 to isoleucine 276.

This sequence belongs to the Lgt family.

It localises to the cell inner membrane. The catalysed reaction is L-cysteinyl-[prolipoprotein] + a 1,2-diacyl-sn-glycero-3-phospho-(1'-sn-glycerol) = an S-1,2-diacyl-sn-glyceryl-L-cysteinyl-[prolipoprotein] + sn-glycerol 1-phosphate + H(+). It participates in protein modification; lipoprotein biosynthesis (diacylglyceryl transfer). Its function is as follows. Catalyzes the transfer of the diacylglyceryl group from phosphatidylglycerol to the sulfhydryl group of the N-terminal cysteine of a prolipoprotein, the first step in the formation of mature lipoproteins. The protein is Phosphatidylglycerol--prolipoprotein diacylglyceryl transferase of Zymomonas mobilis subsp. mobilis (strain ATCC 31821 / ZM4 / CP4).